The chain runs to 444 residues: Signal recognition particle 54 kDa protein (444 aa).

Residues 104-111, 184-188, and 242-245 contribute to the GTP site; these read GLQGSGKT, DTAGR, and TKLD.

Belongs to the GTP-binding SRP family. SRP54 subfamily. Part of the signal recognition particle protein translocation system, which is composed of SRP and FtsY. Archaeal SRP consists of a 7S RNA molecule of 300 nucleotides and two protein subunits: SRP54 and SRP19.

It localises to the cytoplasm. The catalysed reaction is GTP + H2O = GDP + phosphate + H(+). Its function is as follows. Involved in targeting and insertion of nascent membrane proteins into the cytoplasmic membrane. Binds to the hydrophobic signal sequence of the ribosome-nascent chain (RNC) as it emerges from the ribosomes. The SRP-RNC complex is then targeted to the cytoplasmic membrane where it interacts with the SRP receptor FtsY. The protein is Signal recognition particle 54 kDa protein of Methanothrix thermoacetophila (strain DSM 6194 / JCM 14653 / NBRC 101360 / PT) (Methanosaeta thermophila).